Here is a 476-residue protein sequence, read N- to C-terminus: mRNA cap guanine-N(7) methyltransferase (476 aa).

A compositionally biased stretch (basic and acidic residues) spans 1–14 (MANSTKAEEYEKMS). The interval 1 to 128 (MANSTKAEEY…TGDGTQNKRK (128 aa)) is disordered. Over residues 20–50 (ASVNSEAESSFSINENTTASGTGLSGKTSVC) the composition is skewed to polar residues. Phosphoserine occurs at positions 24, 28, and 29. 3 stretches are compositionally biased toward basic and acidic residues: residues 54–68 (DTARKRKEFEDDLVK), 84–93 (LDPEIVPEEK), and 107–117 (RETEDVPKDEY). The residue at position 118 (Ser118) is a Phosphoserine. Positions 126–128 (KRK) match the Nuclear localization signal motif. One can recognise an mRNA cap 0 methyltransferase domain in the interval 167–475 (SRIFYLRNFN…IYLVFAFEKQ (309 aa)). 176 to 177 (NN) provides a ligand contact to mRNA. S-adenosyl-L-methionine contacts are provided by Lys180, Gly205, Asp227, Asp261, Gln284, and Tyr289.

The protein belongs to the class I-like SAM-binding methyltransferase superfamily. mRNA cap 0 methyltransferase family. As to quaternary structure, interacts with importin alpha, leading to stimulate both RNA-binding and methyltransferase activity. Interaction with importin alpha and beta is required for its nuclear localization, importin beta dissociating in response to RanGTP, allowing RNMT-importin alpha to bind RNA substrates. Interacts with elongating form of polymerase II and RNGTT. Interacts with RAMAC, this interaction significantly enhances RNA-binding and cap methyltransferase activity.

It is found in the nucleus. It carries out the reaction a 5'-end (5'-triphosphoguanosine)-ribonucleoside in mRNA + S-adenosyl-L-methionine = a 5'-end (N(7)-methyl 5'-triphosphoguanosine)-ribonucleoside in mRNA + S-adenosyl-L-homocysteine. With respect to regulation, methyltransferase activity is activated by RAMAC. In terms of biological role, catalytic subunit of the mRNA-capping methyltransferase RNMT:RAMAC complex that methylates the N7 position of the added guanosine to the 5'-cap structure of mRNAs. Binds RNA containing 5'-terminal GpppC. This chain is mRNA cap guanine-N(7) methyltransferase (RNMT), found in Macaca fascicularis (Crab-eating macaque).